Reading from the N-terminus, the 135-residue chain is MAKNSRSQWIAKNLQRLLNVGLIMLAAILVVFLVKETIHLGKVLFLSNQETSSYMLIEGIVIYFLYFEFIALIVKYFESGYHFPLRYFIYIGITAIIRLIIVDHENPIDTLIYSGSILVLVVTLYLANTERLKRE.

The next 4 membrane-spanning stretches (helical) occupy residues 20 to 40 (VGLIMLAAILVVFLVKETIHL), 54 to 74 (YMLIEGIVIYFLYFEFIALIV), 82 to 102 (HFPLRYFIYIGITAIIRLIIV), and 107 to 127 (PIDTLIYSGSILVLVVTLYLA).

Belongs to the PsiE family.

It is found in the cell inner membrane. This Yersinia pseudotuberculosis serotype IB (strain PB1/+) protein is Protein PsiE homolog.